The following is a 192-amino-acid chain: MLKKTFAALALGTALLSAGQAMAAEYKIDKEGQHAFVDWKISHLGYSFIHGTFKDFDGNFTWDSAKPEASKISVDLKTASLWSNHAERDKHIASADFLDVKKYPEAKFVSTAVKSTGEKTADVTGDLTLHGVTKPVTFKATFNGEGKDPWGGERAGFNATTTLNLNDFGIKGPGATSQTLDLDISVEGVKQK.

The signal sequence occupies residues Met1–Ala23.

The protein belongs to the UPF0312 family. Type 1 subfamily.

It localises to the periplasm. The sequence is that of UPF0312 protein PputW619_0484 from Pseudomonas putida (strain W619).